Here is a 151-residue protein sequence, read N- to C-terminus: Transcriptional regulator MraZ (151 aa).

SpoVT-AbrB domains follow at residues 5–51 (AHEL…PVAE) and 81–124 (AEIL…GREQ).

This sequence belongs to the MraZ family. Forms oligomers.

It is found in the cytoplasm. It localises to the nucleoid. The protein is Transcriptional regulator MraZ of Neisseria meningitidis serogroup C / serotype 2a (strain ATCC 700532 / DSM 15464 / FAM18).